We begin with the raw amino-acid sequence, 381 residues long: Cytochrome b (381 aa).

Transmembrane regions (helical) follow at residues 34 to 54 (FGSLLGLCLIIQILTGLFLAM), 78 to 99 (WLIRNIHANGASLFFICVYLHI), 114 to 134 (WNIGVILLFLLMATAFVGYVL), and 179 to 199 (FFAFHFLLPFLILALTVIHLL). Heme b-binding residues include His84 and His98. The heme b site is built by His183 and His197. His202 provides a ligand contact to a ubiquinone. Helical transmembrane passes span 227–247 (YKDLLGFFVMIFFLTTLALFM), 289–309 (LGGVLALLFSIFILMLVPLLH), 321–341 (LTQIFFWLLVANSIILTWIGG), and 348–368 (FITVGQIASISYFSLFLIIMP).

This sequence belongs to the cytochrome b family. As to quaternary structure, the cytochrome bc1 complex contains 3 respiratory subunits (MT-CYB, CYC1 and UQCRFS1), 2 core proteins (UQCRC1 and UQCRC2) and probably 6 low-molecular weight proteins. Requires heme b as cofactor.

The protein resides in the mitochondrion inner membrane. Component of the ubiquinol-cytochrome c reductase complex (complex III or cytochrome b-c1 complex) that is part of the mitochondrial respiratory chain. The b-c1 complex mediates electron transfer from ubiquinol to cytochrome c. Contributes to the generation of a proton gradient across the mitochondrial membrane that is then used for ATP synthesis. The polypeptide is Cytochrome b (mt-cyb) (Sphyrna lewini (Scalloped hammerhead shark)).